The chain runs to 391 residues: Oxytocin receptor (391 aa).

The Extracellular portion of the chain corresponds to 1-38 (MEGAFAANWSAEAVNGSAAPPGTEGNRTAGPPQRNEAL). Asn8, Asn15, and Asn26 each carry an N-linked (GlcNAc...) asparagine glycan. The helical transmembrane segment at 39–63 (ARVEVAVLSLILFLALSGNACVLLA) threads the bilayer. At 64–74 (LRTTRHKHSRL) the chain is on the cytoplasmic side. A helical membrane pass occupies residues 75–97 (FFFMKHLSIADLAVAVFQVLPQL). The Extracellular segment spans residues 98 to 113 (LWDITFRFYGPDLLCR). Cys112 and Cys187 form a disulfide bridge. Residues 114–135 (LVKYLQVVGMFASTYLLLLMSL) form a helical membrane-spanning segment. The Cytoplasmic segment spans residues 136–154 (DRCLAICQPLRSLRRRTDR). Residues 155 to 175 (LAVLATWLGCLVASAPQVHIF) traverse the membrane as a helical segment. Topologically, residues 176 to 202 (SLREVADGVFDCWAVFIQPWGPKAYIT) are extracellular. Residues 203-225 (WITLAVYIVPVIVLAACYGLISF) traverse the membrane as a helical segment. Residues 226–277 (KIWQNLRLKTEAAAAEASAGAEGAAADCAGRAALARVSNVKLISKAKIRTVK) lie on the Cytoplasmic side of the membrane. The chain crosses the membrane as a helical span at residues 278–296 (MTFIVVLAFIVCWTPFFFK). The Extracellular portion of the chain corresponds to 297-311 (QMWSVWDADAPKEAS). A helical membrane pass occupies residues 312 to 334 (AFIIAMLLASLNSCCNPWIYMLF). At 335-391 (TGHLFQDLVQRFLCCSFRRLKGSQLGETSVTKKIHSYTFVLSRHSSSQRSCSQPSTV) the chain is on the cytoplasmic side. Ser370 is modified (phosphoserine).

Belongs to the G-protein coupled receptor 1 family. Vasopressin/oxytocin receptor subfamily.

The protein localises to the cell membrane. Functionally, receptor for oxytocin. The activity of this receptor is mediated by G proteins which activate a phosphatidylinositol-calcium second messenger system. This chain is Oxytocin receptor (OXTR), found in Ovis aries (Sheep).